We begin with the raw amino-acid sequence, 532 residues long: Muscarinic acetylcholine receptor M5 (532 aa).

At 1 to 29 the chain is on the extracellular side; the sequence is MEGESYHNETTVNGTPVNHQALERHGLWE. N-linked (GlcNAc...) asparagine glycosylation is present at N8. A helical membrane pass occupies residues 30-53; it reads VITIAAVTAVVSLMTIVGNVLVMI. The Cytoplasmic portion of the chain corresponds to 54–66; the sequence is SFKVNSQLKTVNN. Residues 67 to 87 traverse the membrane as a helical segment; the sequence is YYLLSLACADLIIGIFSMNLY. Residues 88-104 lie on the Extracellular side of the membrane; the sequence is TTYILMGRWVLGSLACD. A disulfide bridge links C103 with C183. The chain crosses the membrane as a helical span at residues 105–126; that stretch reads LWLALDYVASNASVMNLLVISF. Topologically, residues 127–146 are cytoplasmic; it reads DRYFSITRPLTYRAKRTPKR. A helical membrane pass occupies residues 147 to 169; the sequence is AGIMIGLAWLVSFILWAPAILCW. Residues 170–191 lie on the Extracellular side of the membrane; that stretch reads QYLVGKRTVPPDECQIQFLSEP. A helical membrane pass occupies residues 192 to 214; the sequence is TITFGTAIAAFYIPVSVMTILYC. The Cytoplasmic segment spans residues 215 to 443; sequence RIYRETEKRT…LVKERKAAQT (229 aa). Residues 265-290 are disordered; the sequence is VRNQASWSSSRRSTSTTGKPTQATDL. Residues 270-281 show a composition bias toward low complexity; that stretch reads SWSSSRRSTSTT. The chain crosses the membrane as a helical span at residues 444-464; it reads LSAILLAFIITWTPYNIMVLV. Topologically, residues 465–478 are extracellular; the sequence is STFCDKCVPVTLWH. A helical membrane pass occupies residues 479–498; that stretch reads LGYWLCYVNSTINPICYALC. Topologically, residues 499–532 are cytoplasmic; the sequence is NRTFRKTFKLLLLCRWKKKKVEEKLYWQGNSKLP. Phosphothreonine is present on residues T501 and T505.

This sequence belongs to the G-protein coupled receptor 1 family. Muscarinic acetylcholine receptor subfamily. CHRM5 sub-subfamily.

It is found in the cell membrane. It localises to the postsynaptic cell membrane. Its function is as follows. The muscarinic acetylcholine receptor mediates various cellular responses, including inhibition of adenylate cyclase, breakdown of phosphoinositides and modulation of potassium channels through the action of G proteins. Primary transducing effect is Pi turnover. The polypeptide is Muscarinic acetylcholine receptor M5 (Chrm5) (Mus musculus (Mouse)).